We begin with the raw amino-acid sequence, 165 residues long: MAKVEQNEGLVEKLVAVDRVAKVVKGGRIFSFTALTVVGDGNGRVGFGRGKAREVPAAISKALEAARRNMITVDLAGTTLQHPVNARHGASRVYMQPASEGTGVIAGGAMRAVLEAAGVHNVLAKCYGSTNAANVVNATFKGLRDMTSPEKVAAKRGLSVEQIQG.

The S5 DRBM domain occupies 10–73 (LVEKLVAVDR…EAARRNMITV (64 aa)).

It belongs to the universal ribosomal protein uS5 family. In terms of assembly, part of the 30S ribosomal subunit. Contacts proteins S4 and S8.

Functionally, with S4 and S12 plays an important role in translational accuracy. In terms of biological role, located at the back of the 30S subunit body where it stabilizes the conformation of the head with respect to the body. The polypeptide is Small ribosomal subunit protein uS5 (Acinetobacter baylyi (strain ATCC 33305 / BD413 / ADP1)).